Consider the following 615-residue polypeptide: Elongation factor 4 (615 aa).

In terms of domain architecture, tr-type G spans 14–200; the sequence is ARIRNFCIIA…KVVELIPAPT (187 aa). GTP is bound by residues 26 to 31 and 147 to 150; these read DHGKST and NKID.

It belongs to the TRAFAC class translation factor GTPase superfamily. Classic translation factor GTPase family. LepA subfamily.

The protein resides in the cell membrane. It catalyses the reaction GTP + H2O = GDP + phosphate + H(+). Functionally, required for accurate and efficient protein synthesis under certain stress conditions. May act as a fidelity factor of the translation reaction, by catalyzing a one-codon backward translocation of tRNAs on improperly translocated ribosomes. Back-translocation proceeds from a post-translocation (POST) complex to a pre-translocation (PRE) complex, thus giving elongation factor G a second chance to translocate the tRNAs correctly. Binds to ribosomes in a GTP-dependent manner. This is Elongation factor 4 from Corynebacterium glutamicum (strain ATCC 13032 / DSM 20300 / JCM 1318 / BCRC 11384 / CCUG 27702 / LMG 3730 / NBRC 12168 / NCIMB 10025 / NRRL B-2784 / 534).